The sequence spans 110 residues: U1-lycotoxin-Ls1gg (110 aa).

The N-terminal stretch at 1–20 is a signal peptide; that stretch reads MKFVLLFGVLLVTLFSYSSA. Positions 21-44 are excised as a propeptide; sequence EMLDDFDQADEDELLSLIEKEEAR. Intrachain disulfides connect cysteine 54–cysteine 71, cysteine 61–cysteine 89, and cysteine 73–cysteine 87.

Belongs to the neurotoxin 19 (CSTX) family. 03 subfamily. In terms of tissue distribution, expressed by the venom gland.

It is found in the secreted. The sequence is that of U1-lycotoxin-Ls1gg from Lycosa singoriensis (Wolf spider).